We begin with the raw amino-acid sequence, 466 residues long: Prophage integrase IntF (466 aa).

A Core-binding (CB) domain is found at 134–239 (KTKVTFSVAW…LLRAFIKWSN (106 aa)). The Tyr recombinase domain occupies 268–445 (KADDCLQKEQ…PLDLLRKWHE (178 aa)). Residues arginine 306, lysine 328, histidine 396, arginine 399, and histidine 422 contribute to the active site. Tyrosine 432 (O-(3'-phospho-DNA)-tyrosine intermediate) is an active-site residue.

It belongs to the 'phage' integrase family.

In terms of biological role, integrase is necessary for integration of the phage into the host genome by site-specific recombination. In conjunction with excisionase, integrase is also necessary for excision of the prophage from the host genome. The protein is Prophage integrase IntF (intF) of Escherichia coli (strain K12).